The sequence spans 170 residues: Ribosome-binding factor A (170 aa).

Residues 123-170 (AKAGVYAGDEDPYVKPRVIGEDEDDDDEEGDEDGDDVDRSAPGYEPAH) form a disordered region. Over residues 143 to 158 (EDEDDDDEEGDEDGDD) the composition is skewed to acidic residues.

This sequence belongs to the RbfA family. In terms of assembly, monomer. Binds 30S ribosomal subunits, but not 50S ribosomal subunits or 70S ribosomes.

Its subcellular location is the cytoplasm. Its function is as follows. One of several proteins that assist in the late maturation steps of the functional core of the 30S ribosomal subunit. Associates with free 30S ribosomal subunits (but not with 30S subunits that are part of 70S ribosomes or polysomes). Required for efficient processing of 16S rRNA. May interact with the 5'-terminal helix region of 16S rRNA. In Clavibacter sepedonicus (Clavibacter michiganensis subsp. sepedonicus), this protein is Ribosome-binding factor A.